A 108-amino-acid chain; its full sequence is Histone H4 (108 aa).

The segment at 1-36 (MSSAQSRGGKTGGKVGGKVGAKRHKKTQKEHINGIT) is disordered. The span at 9–19 (GKTGGKVGGKV) shows a compositional bias: gly residues.

Belongs to the histone H4 family. The nucleosome is a histone octamer containing two molecules each of H2A, H2B, H3 and H4 assembled in one H3-H4 heterotetramer and two H2A-H2B heterodimers. The octamer wraps approximately 147 bp of DNA.

The protein localises to the nucleus. Its subcellular location is the chromosome. Its function is as follows. Core component of nucleosome. Nucleosomes wrap and compact DNA into chromatin, limiting DNA accessibility to the cellular machineries which require DNA as a template. Histones thereby play a central role in transcription regulation, DNA repair, DNA replication and chromosomal stability. DNA accessibility is regulated via a complex set of post-translational modifications of histones, also called histone code, and nucleosome remodeling. This chain is Histone H4 (H4a), found in Dictyostelium discoideum (Social amoeba).